Consider the following 203-residue polypeptide: Cardiotrophin-2 (203 aa).

The first 21 residues, 1–21, serve as a signal peptide directing secretion; it reads MSCSLARLCLLTLLSPPLSSA. Residue Asn-43 is glycosylated (N-linked (GlcNAc...) asparagine).

Belongs to the IL-6 superfamily.

The protein localises to the secreted. Its function is as follows. May have an important role in neuronal precursor development and maturation. This chain is Cardiotrophin-2 (CTF2), found in Pan troglodytes (Chimpanzee).